A 147-amino-acid polypeptide reads, in one-letter code: Receptor activity-modifying protein 3 (147 aa).

The first 22 residues, 1 to 22 (MATPAQRLHLLPLLLLLCGECA), serve as a signal peptide directing secretion. Topologically, residues 23 to 112 (QVCGCNETGM…CTVDRTHWED (90 aa)) are extracellular. 4 N-linked (GlcNAc...) asparagine glycosylation sites follow: asparagine 28, asparagine 57, asparagine 70, and asparagine 102. Intrachain disulfides connect cysteine 39-cysteine 71 and cysteine 56-cysteine 103. A helical membrane pass occupies residues 113–137 (PPDEVLIPLIAVPVLLTVAMAGLVV). Residues 138 to 147 (WRSKRTDRLL) are Cytoplasmic-facing.

It belongs to the RAMP family. As to quaternary structure, heterodimer of CALCRL and RAMP3; interaction induces allosteric modulation of CALCRL function and ligand specificity for adrenomedullin/ADM and intermedin/ADM2. Heterodimer of CALCR and RAMP3; interaction form the receptor complex AMYR3 for amylin/IAPP. Interacts with GPER1.

The protein resides in the cell membrane. It is found in the membrane. Accessory protein that interacts with and modulates the function of G-protein coupled receptors including calcitonin gene-related peptide type 1 receptor (CALCRL), calcitonin receptor (CALCR) and G-protein coupled estrogen receptor 1 (GPER1). Required for the transport of CALCRL and GPER1 receptors to the plasma membrane. Plays a role in cardioprotection by reducing cardiac hypertrophy and perivascular fibrosis in a GPER1-dependent manner. Together with CALCRL, form a receptor complex for adrenomedullin/ADM and intermedin/ADM2. Together with CALCR, act as a receptor complex for amylin/IAPP. This chain is Receptor activity-modifying protein 3, found in Rattus norvegicus (Rat).